The following is a 215-amino-acid chain: UPF0502 protein YceH (215 aa).

Lys80 carries the N6-acetyllysine modification.

This sequence belongs to the UPF0502 family.

The protein is UPF0502 protein YceH of Escherichia coli O7:K1 (strain IAI39 / ExPEC).